Here is a 255-residue protein sequence, read N- to C-terminus: Triosephosphate isomerase (255 aa).

9–11 contacts substrate; sequence NWK. His95 (electrophile) is an active-site residue. Glu167 functions as the Proton acceptor in the catalytic mechanism. Substrate contacts are provided by residues Gly173, Ser212, and 233–234; that span reads GG.

This sequence belongs to the triosephosphate isomerase family. In terms of assembly, homodimer.

The protein resides in the cytoplasm. It catalyses the reaction D-glyceraldehyde 3-phosphate = dihydroxyacetone phosphate. The protein operates within carbohydrate biosynthesis; gluconeogenesis. It functions in the pathway carbohydrate degradation; glycolysis; D-glyceraldehyde 3-phosphate from glycerone phosphate: step 1/1. Its function is as follows. Involved in the gluconeogenesis. Catalyzes stereospecifically the conversion of dihydroxyacetone phosphate (DHAP) to D-glyceraldehyde-3-phosphate (G3P). The chain is Triosephosphate isomerase from Enterobacter cloacae.